Reading from the N-terminus, the 181-residue chain is uncharacterized protein (181 aa).

This is an uncharacterized protein from Rickettsia prowazekii (strain Madrid E).